We begin with the raw amino-acid sequence, 257 residues long: Enterotoxin type A (257 aa).

Residues 1 to 27 form the signal peptide; sequence MKKTAFILLLFIALTWTTSPLVNGSEK. Cysteines 120 and 130 form a disulfide. Zn(2+) contacts are provided by His211, His249, and Asp251.

Belongs to the staphylococcal/streptococcal toxin family. As to quaternary structure, monomer. Interacts with MHC class II molecules alpha/HLA-DRB1 and beta/HLA-DRA chains. The interaction with MHC-II molecules occurs at both zinc-dependent and zinc-independent sites. Interacts with T-cell receptor beta variable 7-9/TRBV7-9. Zn(2+) serves as cofactor.

The protein resides in the secreted. Staphylococcal enterotoxin that activates the host immune system by binding as unprocessed molecules to major histocompatibility (MHC) complex class II and T-cell receptor (TCR) molecules. In turn, waves of cellular activation, cytokine production, and migration into the lung tissue and airways occur via alphabeta T-cells. Also causes the intoxication staphylococcal food poisoning syndrome. The illness is characterized by high fever, hypotension, diarrhea, shock, and in some cases death. This chain is Enterotoxin type A (sea), found in Staphylococcus aureus (strain Newman).